A 252-amino-acid polypeptide reads, in one-letter code: 3-deoxy-manno-octulosonate cytidylyltransferase 2 (252 aa).

This sequence belongs to the KdsB family.

The protein resides in the cytoplasm. The catalysed reaction is 3-deoxy-alpha-D-manno-oct-2-ulosonate + CTP = CMP-3-deoxy-beta-D-manno-octulosonate + diphosphate. It functions in the pathway nucleotide-sugar biosynthesis; CMP-3-deoxy-D-manno-octulosonate biosynthesis; CMP-3-deoxy-D-manno-octulosonate from 3-deoxy-D-manno-octulosonate and CTP: step 1/1. It participates in bacterial outer membrane biogenesis; lipopolysaccharide biosynthesis. Activates KDO (a required 8-carbon sugar) for incorporation into bacterial lipopolysaccharide in Gram-negative bacteria. This chain is 3-deoxy-manno-octulosonate cytidylyltransferase 2, found in Actinobacillus pleuropneumoniae serotype 5b (strain L20).